We begin with the raw amino-acid sequence, 149 residues long: Large ribosomal subunit protein uL13 (149 aa).

It belongs to the universal ribosomal protein uL13 family. In terms of assembly, part of the 50S ribosomal subunit.

This protein is one of the early assembly proteins of the 50S ribosomal subunit, although it is not seen to bind rRNA by itself. It is important during the early stages of 50S assembly. In Thermosipho africanus (strain TCF52B), this protein is Large ribosomal subunit protein uL13.